A 388-amino-acid chain; its full sequence is Pepsin A-4 (388 aa).

Positions 1-15 (MKWLLLLGLVALSEC) are cleaved as a signal peptide. A propeptide spans 16 to 62 (IMYKVPLIRKKSLRRTLSERGLLKDFLKKHNLNPARKYFPQWEAPTL) (activation peptide). A Peptidase A1 domain is found at 76 to 385 (YFGTIGIGTP…DRANNQVGLA (310 aa)). Aspartate 94 is a catalytic residue. The cysteines at positions 107 and 112 are disulfide-linked. Serine 130 bears the Phosphoserine mark. A disulfide bridge links cysteine 268 with cysteine 272. Residue aspartate 277 is part of the active site. A disulfide bridge links cysteine 311 with cysteine 344.

Belongs to the peptidase A1 family.

The protein localises to the secreted. It carries out the reaction Preferential cleavage: hydrophobic, preferably aromatic, residues in P1 and P1' positions. Cleaves 1-Phe-|-Val-2, 4-Gln-|-His-5, 13-Glu-|-Ala-14, 14-Ala-|-Leu-15, 15-Leu-|-Tyr-16, 16-Tyr-|-Leu-17, 23-Gly-|-Phe-24, 24-Phe-|-Phe-25 and 25-Phe-|-Tyr-26 bonds in the B chain of insulin.. Functionally, shows particularly broad specificity; although bonds involving phenylalanine and leucine are preferred, many others are also cleaved to some extent. The polypeptide is Pepsin A-4 (PGA4) (Homo sapiens (Human)).